Here is a 419-residue protein sequence, read N- to C-terminus: Gamma-glutamyl phosphate reductase (419 aa).

It belongs to the gamma-glutamyl phosphate reductase family.

It localises to the cytoplasm. The catalysed reaction is L-glutamate 5-semialdehyde + phosphate + NADP(+) = L-glutamyl 5-phosphate + NADPH + H(+). It functions in the pathway amino-acid biosynthesis; L-proline biosynthesis; L-glutamate 5-semialdehyde from L-glutamate: step 2/2. Functionally, catalyzes the NADPH-dependent reduction of L-glutamate 5-phosphate into L-glutamate 5-semialdehyde and phosphate. The product spontaneously undergoes cyclization to form 1-pyrroline-5-carboxylate. The chain is Gamma-glutamyl phosphate reductase from Yersinia pseudotuberculosis serotype O:1b (strain IP 31758).